The sequence spans 372 residues: Glutamate 5-kinase (372 aa).

Lys14 serves as a coordination point for ATP. Substrate contacts are provided by Ser54, Asp141, and Asn153. 173–174 (TD) is an ATP binding site. A PUA domain is found at 280-358 (RGHVVIDDGA…GEIESVLGYM (79 aa)).

It belongs to the glutamate 5-kinase family.

The protein localises to the cytoplasm. The catalysed reaction is L-glutamate + ATP = L-glutamyl 5-phosphate + ADP. Its pathway is amino-acid biosynthesis; L-proline biosynthesis; L-glutamate 5-semialdehyde from L-glutamate: step 1/2. Catalyzes the transfer of a phosphate group to glutamate to form L-glutamate 5-phosphate. This chain is Glutamate 5-kinase, found in Paraburkholderia phytofirmans (strain DSM 17436 / LMG 22146 / PsJN) (Burkholderia phytofirmans).